The following is a 404-amino-acid chain: Phosphoglycerate kinase (404 aa).

Substrate is bound by residues 22-24, Arg37, 60-63, Arg120, and Arg160; these read DFN and HLGR. Residues Lys215, Glu333, and 360–363 each bind ATP; that span reads GGDS.

It belongs to the phosphoglycerate kinase family. In terms of assembly, monomer.

Its subcellular location is the cytoplasm. The catalysed reaction is (2R)-3-phosphoglycerate + ATP = (2R)-3-phospho-glyceroyl phosphate + ADP. The protein operates within carbohydrate degradation; glycolysis; pyruvate from D-glyceraldehyde 3-phosphate: step 2/5. This Latilactobacillus sakei subsp. sakei (strain 23K) (Lactobacillus sakei subsp. sakei) protein is Phosphoglycerate kinase.